Reading from the N-terminus, the 442-residue chain is tRNA modification GTPase MnmE (442 aa).

Residues R21, E79, and K118 each contribute to the (6S)-5-formyl-5,6,7,8-tetrahydrofolate site. The TrmE-type G domain maps to 214 to 367 (GFKIAIIGKP…LKEELQNYLN (154 aa)). Residue N224 coordinates K(+). Residues 224–229 (NVGKSS), 243–249 (SDIAGTT), and 268–271 (DTAG) contribute to the GTP site. Residue S228 coordinates Mg(2+). The K(+) site is built by S243, I245, and T248. T249 is a Mg(2+) binding site. Residue K442 coordinates (6S)-5-formyl-5,6,7,8-tetrahydrofolate.

This sequence belongs to the TRAFAC class TrmE-Era-EngA-EngB-Septin-like GTPase superfamily. TrmE GTPase family. Homodimer. Heterotetramer of two MnmE and two MnmG subunits. The cofactor is K(+).

It is found in the cytoplasm. Its function is as follows. Exhibits a very high intrinsic GTPase hydrolysis rate. Involved in the addition of a carboxymethylaminomethyl (cmnm) group at the wobble position (U34) of certain tRNAs, forming tRNA-cmnm(5)s(2)U34. This is tRNA modification GTPase MnmE from Campylobacter jejuni subsp. doylei (strain ATCC BAA-1458 / RM4099 / 269.97).